Here is a 271-residue protein sequence, read N- to C-terminus: Tryptophan synthase alpha chain (271 aa).

Catalysis depends on proton acceptor residues Glu49 and Asp60.

This sequence belongs to the TrpA family. In terms of assembly, tetramer of two alpha and two beta chains.

It carries out the reaction (1S,2R)-1-C-(indol-3-yl)glycerol 3-phosphate + L-serine = D-glyceraldehyde 3-phosphate + L-tryptophan + H2O. Its pathway is amino-acid biosynthesis; L-tryptophan biosynthesis; L-tryptophan from chorismate: step 5/5. In terms of biological role, the alpha subunit is responsible for the aldol cleavage of indoleglycerol phosphate to indole and glyceraldehyde 3-phosphate. This chain is Tryptophan synthase alpha chain, found in Burkholderia pseudomallei (strain 1106a).